Reading from the N-terminus, the 192-residue chain is Glycerol-3-phosphate acyltransferase (192 aa).

Helical transmembrane passes span 3–23 (ALFL…EVIA), 51–71 (YGVL…LIAV), 80–100 (VLTF…FFGF), 112–132 (VVFA…LGIF), and 149–169 (AFLF…AIVI).

The protein belongs to the PlsY family. In terms of assembly, probably interacts with PlsX.

The protein localises to the cell inner membrane. The catalysed reaction is an acyl phosphate + sn-glycerol 3-phosphate = a 1-acyl-sn-glycero-3-phosphate + phosphate. The protein operates within lipid metabolism; phospholipid metabolism. Functionally, catalyzes the transfer of an acyl group from acyl-phosphate (acyl-PO(4)) to glycerol-3-phosphate (G3P) to form lysophosphatidic acid (LPA). This enzyme utilizes acyl-phosphate as fatty acyl donor, but not acyl-CoA or acyl-ACP. The polypeptide is Glycerol-3-phosphate acyltransferase (Aquifex aeolicus (strain VF5)).